The following is a 2413-amino-acid chain: Pre-mRNA-splicing factor 8 (2413 aa).

2 stretches are compositionally biased toward pro residues: residues 1 to 10 and 19 to 28; these read MSGLPPPPPG and LPPPPPPPPG. The interval 1–60 is disordered; the sequence is MSGLPPPPPGFEEDSDLALPPPPPPPPGYEIEELDNPMVPSSVNEDTFLPPPPPPPSNFE. The segment at 253-543 is SNU114/CWC21 interacting domain (SCwid); that stretch reads QHIENIEPLD…LHPTLPTNHN (291 aa). The segment at 885–1375 is reverse transcriptase homology domain; the sequence is VMVEWLESRS…RIQNRVKLGL (491 aa). Positions 1376 to 1649 are linker; the sequence is NSKMPTRFPP…TLKISLIQIF (274 aa). Residues 1585-1598 form an important for branch point selection region; sequence MQFKKLTHAQRTGL. Residues 1653-1824 are restriction endonuclease homology domain; the sequence is LWQKIHESIV…LRERIRKGLQ (172 aa). An RNase H homology domain region spans residues 1839–2092; that stretch reads NYAELFNNDI…ILGQNIKAPS (254 aa). An MPN domain is found at 2182–2311; the sequence is VYVLPKNLLK…LSAYNLTDEG (130 aa).

In terms of assembly, component of the U4/U6-U5 tri-snRNP complex composed of the U4, U6 and U5 snRNAs and at least PRP3, PRP4, PRP6, PRP8, PRP18, PRP31, PRP38, SNU13, SNU23, SNU66, SNU114, SPP381, SMB1, SMD1, SMD2, SMD3, SMX2, SMX3, LSM2, LSM3, LSM4, LSM5, LSM6, LSM7, LSM8, BRR2 and DIB1. Belongs to the CWC complex (or CEF1-associated complex), a spliceosome sub-complex reminiscent of a late-stage spliceosome composed of the U2, U5 and U6 snRNAs and at least BUD13, BUD31, BRR2, CDC40, CEF1, CLF1, CUS1, CWC2, CWC15, CWC21, CWC22, CWC23, CWC24, CWC25, CWC27, ECM2, HSH155, IST3, ISY1, LEA1, MSL1, NTC20, PRP8, PRP9, PRP11, PRP19, PRP21, PRP22, PRP45, PRP46, SLU7, SMB1, SMD1, SMD2, SMD3, SMX2, SMX3, SNT309, SNU114, SPP2, SYF1, SYF2, RSE1 and YJU2. Interacts with PRP40 and SNP1. Interacts (via SCwid domain) with CWC21. Interacts (via SCwid domain) with SNU114 (via N-terminus). Interacts (via RNase H homology domain and MPN domain) with BRR2; this modulates BRR2 ATPase and helicase activity. Interacts (via RNase H homology domain) with AAR2. AAR2 and BRR2 compete for PRP8 binding, and during U5 snRNP maturation BRR2 displaces the initially bound AAR2. Is associated with snRNP U5, together with SNU114 and BRR2.

The protein localises to the nucleus. Functions as a scaffold that mediates the ordered assembly of spliceosomal proteins and snRNAs. Required for association of BRR2 with the spliceosomal U5 snRNP, and the subsequent assembly of the U4/U6-U5 tri-snRNP complex. Functions as a scaffold that positions spliceosomal U2, U5 and U6 snRNAs at splice sites on pre-mRNA substrates, so that splicing can occur. Interacts with both the 5' and the 3' splice site, as well as the branch region. Has a role in branch site-3' splice site selection. Associates with the branch site-3' splice 3'-exon region. Also has a role in cell cycle. This chain is Pre-mRNA-splicing factor 8 (PRP8), found in Saccharomyces cerevisiae (strain ATCC 204508 / S288c) (Baker's yeast).